Here is a 246-residue protein sequence, read N- to C-terminus: Flagellar L-ring protein (246 aa).

The signal sequence occupies residues 1 to 20 (MMQKCLSPKTLIAALVVLSA). Residue Cys21 is the site of N-palmitoyl cysteine attachment. Cys21 carries the S-diacylglycerol cysteine lipid modification.

Belongs to the FlgH family. The basal body constitutes a major portion of the flagellar organelle and consists of four rings (L,P,S, and M) mounted on a central rod.

The protein localises to the cell outer membrane. The protein resides in the bacterial flagellum basal body. Assembles around the rod to form the L-ring and probably protects the motor/basal body from shearing forces during rotation. The polypeptide is Flagellar L-ring protein (Ruegeria pomeroyi (strain ATCC 700808 / DSM 15171 / DSS-3) (Silicibacter pomeroyi)).